The following is a 518-amino-acid chain: Sensor protein kinase HptS (518 aa).

2 consecutive transmembrane segments (helical) span residues 20–40 (IFPV…IYIW) and 222–242 (GITL…FGFI). The Histidine kinase domain maps to 297–513 (EQLIHSIEHT…LICYKIPLSR (217 aa)). Histidine 325 bears the Phosphohistidine; by autocatalysis mark.

In terms of processing, autophosphorylated.

The protein localises to the cell membrane. It catalyses the reaction ATP + protein L-histidine = ADP + protein N-phospho-L-histidine.. Its function is as follows. Member of the two-component regulatory system HptS/HptR that regulates genes involved in hexose phosphate transport system in response to changes in extracellular phosphate sources. May act as a sensor protein kinase which is autophosphorylated at a histidine residue and transfers its phosphate group to the conserved aspartic acid residue in the regulatory domain of HptS. In turn, HptS antagonizes CcpA-dependent transcription of a subset of CcpA-regulated genes involved in antibiotic susceptibility. The polypeptide is Sensor protein kinase HptS (hptS) (Staphylococcus aureus (strain MSSA476)).